A 46-amino-acid polypeptide reads, in one-letter code: Large ribosomal subunit protein bL36B (46 aa).

Belongs to the bacterial ribosomal protein bL36 family.

The protein is Large ribosomal subunit protein bL36B of Cronobacter sakazakii (strain ATCC BAA-894) (Enterobacter sakazakii).